The following is a 733-amino-acid chain: MADPRQEFDTMEDHAGDYTLLQDQEGDMDHGLKESPPQPPADDGAEEPGSETSDAKSTPTAEDVTAPLVDERAPDKQAAAQPHTEIPEGITAEEAGIGDTPNQEDQAAGHVTQGRREGQAPDLGTSDWTRQQVSSMSGAPLLPQGLREATCQPSGTRPEDIEKSHPASELLRRGPPQKEGWGQDRLGSEEEVDEDLTVDESSQDSPPSQASLTPGRAAPQAGSGSVCGETASVPGLPTEGSVPLPADFFSKVSAETQASQPEGPGTGPMEEGHEAAPEFTFHVEIKASTPKEQDLEGATVVGVPGEEQKAQTQGPSVGKGTKEASLQEPPGKQPAAGLPGRPVSRVPQLKARVASKDRTGNDEKKAKTSTPSCAKAPSHRPCLSPTRPTLGSSDPLIKPSSPAVSPEPATSPKHVSSVTPRNGSPGTKQMKLKGADGKTGAKIATPRGAASPAQKGTSNATRIPAKTTPSPKTPPGSGEPPKSGERSGYSSPGSPGTPGSRSRTPSLPTPPTREPKKVAVVRTPPKSPSASKSRLQTAPVPMPDLKNVRSKIGSTENLKHQPGGGKVQIINKKLDLSNVQSKCGSKDNIKHVPGGGSVQIVYKPVDLSKVTSKCGSLGNIHHKPGGGQVEVKSEKLDFKDRVQSKIGSLDNITHVPGGGNKKIETHKLTFRENAKAKTDHGAEIVYKSPVVSGDTSPRHLSNVSSTGSIDMVDSPQLATLADEVSASLAKQGL.

Residues 1-16 (MADPRQEFDTMEDHAG) are compositionally biased toward basic and acidic residues. Residues 1 to 548 (MADPRQEFDT…PVPMPDLKNV (548 aa)) form a disordered region. Position 2 is an N-acetylalanine (Ala-2). Tyr-18 is modified (phosphotyrosine; by FYN). Lys-33 participates in a covalent cross-link: Glycyl lysine isopeptide (Lys-Gly) (interchain with G-Cter in ubiquitin). Residues Ser-35 and Ser-50 each carry the phosphoserine modification. The span at 50 to 60 (SETSDAKSTPT) shows a compositional bias: polar residues. Residues Thr-58, Thr-60, and Thr-100 each carry the phosphothreonine modification. Arg-115 is modified (omega-N-methylarginine). The span at 126–137 (SDWTRQQVSSMS) shows a compositional bias: polar residues. Over residues 157–172 (RPEDIEKSHPASELLR) the composition is skewed to basic and acidic residues. Position 188 is a phosphoserine (Ser-188). Positions 189–202 (EEEVDEDLTVDESS) are enriched in acidic residues. Residues 203–212 (QDSPPSQASL) are compositionally biased toward polar residues. Basic and acidic residues-rich tracts occupy residues 270 to 294 (EEGHEAAPEFTFHVEIKASTPKEQD) and 354 to 366 (ASKDRTGNDEKKA). Polar residues predominate over residues 413–427 (KHVSSVTPRNGSPGT). Thr-445 carries the phosphothreonine modification. Arg-447 is subject to Omega-N-methylarginine. Ser-451 is modified (phosphoserine). Lys-455 is modified (N6,N6-dimethyllysine; alternate). Lys-455 is modified (N6-acetyllysine; alternate). A phosphothreonine mark is found at Thr-461, Thr-467, and Thr-468. Ser-470 carries the post-translational modification Phosphoserine. At Thr-473 the chain carries Phosphothreonine. 3 positions are modified to phosphoserine: Ser-477, Ser-483, and Ser-487. Positions 479 to 506 (EPPKSGERSGYSSPGSPGTPGSRSRTPS) are enriched in low complexity. Phosphotyrosine is present on Tyr-489. Ser-490, Ser-491, and Ser-494 each carry phosphoserine. Thr-497 and Thr-504 each carry phosphothreonine. The residue at position 506 (Ser-506) is a Phosphoserine. At Thr-509 the chain carries Phosphothreonine. N6-acetyllysine is present on Lys-517. Thr-523 is subject to Phosphothreonine. Ser-527, Ser-529, and Ser-531 each carry phosphoserine. Tau/MAP repeat units follow at residues 536-566 (QTAPVPMPDLKNVRSKIGSTENLKHQPGGGK), 567-597 (VQIINKKLDLSNVQSKCGSKDNIKHVPGGGS), 598-628 (VQIVYKPVDLSKVTSKCGSLGNIHHKPGGGQ), and 629-660 (VEVKSEKLDFKDRVQSKIGSLDNITHVPGGGN). Residue Lys-546 forms a Glycyl lysine isopeptide (Lys-Gly) (interchain with G-Cter in ubiquitin) linkage. N6-acetyllysine; alternate is present on Lys-551. Lys-551 bears the N6-methyllysine; alternate mark. A Glycyl lysine isopeptide (Lys-Gly) (interchain with G-Cter in ubiquitin); alternate cross-link involves residue Lys-551. Ser-554 is modified (phosphoserine; by MARK1, BRSK1, BRSK2 and PHK). A Glycyl lysine isopeptide (Lys-Gly) (interchain with G-Cter in ubiquitin) cross-link involves residue Lys-559. At Lys-573 the chain carries N6-acetyllysine; alternate. Residue Lys-573 forms a Glycyl lysine isopeptide (Lys-Gly) (interchain with G-Cter in ubiquitin); alternate linkage. Phosphoserine is present on residues Ser-577 and Ser-581. Position 582 is an N6-acetyllysine (Lys-582). Cys-583 and Cys-614 are joined by a disulfide. Phosphoserine is present on Ser-585. At Lys-590 the chain carries N6-acetyllysine; alternate. Lys-590 is covalently cross-linked (Glycyl lysine isopeptide (Lys-Gly) (interchain with G-Cter in ubiquitin); alternate). Ser-597 carries the post-translational modification Phosphoserine. The residue at position 603 (Lys-603) is an N6,N6-dimethyllysine; alternate. Residues Lys-603, Lys-609, and Lys-613 each carry the N6-acetyllysine; alternate modification. Glycyl lysine isopeptide (Lys-Gly) (interchain with G-Cter in ubiquitin); alternate cross-links involve residues Lys-603, Lys-609, and Lys-613. At Ser-616 the chain carries Phosphoserine. N6-acetyllysine; alternate is present on residues Lys-623, Lys-635, and Lys-639. Glycyl lysine isopeptide (Lys-Gly) (interchain with G-Cter in ubiquitin); alternate cross-links involve residues Lys-623, Lys-635, and Lys-639. Arg-641 is subject to Omega-N-methylarginine. Ser-644 is modified (phosphoserine). Residue Lys-645 forms a Glycyl lysine isopeptide (Lys-Gly) (interchain with G-Cter in ubiquitin) linkage. Ser-648 bears the Phosphoserine mark. Residue Lys-661 is modified to N6-acetyllysine; alternate. A Glycyl lysine isopeptide (Lys-Gly) (interchain with G-Cter in ubiquitin); alternate cross-link involves residue Lys-661. Lys-667 is covalently cross-linked (Glycyl lysine isopeptide (Lys-Gly) (interchain with G-Cter in ubiquitin)). Lys-677 is modified (N6-acetyllysine; alternate). Lys-677 participates in a covalent cross-link: Glycyl lysine isopeptide (Lys-Gly) (interchain with G-Cter in ubiquitin); alternate. At Tyr-686 the chain carries Phosphotyrosine. The residue at position 688 (Ser-688) is a Phosphoserine. Residues 690–709 (VVSGDTSPRHLSNVSSTGSI) are disordered. Ser-692 carries the post-translational modification Phosphoserine; alternate. O-linked (GlcNAc...) serine; alternate glycosylation occurs at Ser-692. Polar residues predominate over residues 693 to 708 (GDTSPRHLSNVSSTGS). A Phosphothreonine modification is found at Thr-695. Ser-696, Ser-701, Ser-708, and Ser-714 each carry phosphoserine. Thr-719 is modified (phosphothreonine).

As to quaternary structure, interacts with MARK1, MARK2, MARK3 and MARK4. Interacts with SQSTM1 when polyubiquitinated. Interacts with PSMC2 through SQSTM1. Interacts with FKBP4. Binds to CSNK1D. Interacts with SGK1. Interacts with EPM2A; the interaction dephosphorylates MAPT at Ser-369. Interacts with PIN1. Interacts with LRRK2. Interacts with LRP1, leading to endocytosis; this interaction is reduced in the presence of LRPAP1/RAP. Post-translationally, polyubiquitinated. Requires functional TRAF6 and may provoke SQSTM1-dependent degradation by the proteasome. In terms of processing, phosphorylation at various serine and threonine residues in S-P or T-P motifs by proline-directed protein kinases (PDPK1, CDK1, CDK5, GSK3, MAPK) (a few sites per protein in interphase, more in mitosis), and at serine residues in K-X-G-S motifs by MAP/microtubule affinity-regulating kinase (MARK1, MARK2, MARK3, MARK4), causing detachment from microtubules, and their disassembly. Phosphorylated by PHK. Dephosphorylation at several serine and threonine residues by the serine/threonine phosphatase PPP5C. Phosphorylation at Ser-554 by BRSK1 and BRSK2 in neurons affects ability to bind microtubules and plays a role in neuron polarization. Phosphorylation at Ser-188 by SGK1 mediates microtubule depolymerization and neurite formation in hippocampal neurons. Expressed in neurons and at a lower level in the liver and kidney. Isoform PNS-tau is expressed in the peripheral nervous system while the others are expressed in the central nervous system.

It is found in the cytoplasm. The protein resides in the cytosol. Its subcellular location is the cell membrane. The protein localises to the cytoskeleton. It localises to the cell projection. It is found in the axon. The protein resides in the dendrite. Its subcellular location is the secreted. Functionally, promotes microtubule assembly and stability, and might be involved in the establishment and maintenance of neuronal polarity. The C-terminus binds axonal microtubules while the N-terminus binds neural plasma membrane components, suggesting that tau functions as a linker protein between both. Axonal polarity is predetermined by tau localization (in the neuronal cell) in the domain of the cell body defined by the centrosome. The short isoforms allow plasticity of the cytoskeleton whereas the longer isoforms may preferentially play a role in its stabilization. The chain is Microtubule-associated protein tau from Mus musculus (Mouse).